Reading from the N-terminus, the 510-residue chain is Flagellin A (510 aa).

It belongs to the bacterial flagellin family. As to quaternary structure, heteromer of FlaA and FlaB. FlaB is located proximal to the hook while the remainder of the filament is composed of the predominant FlaA.

Its subcellular location is the secreted. It localises to the bacterial flagellum. Functionally, flagellin is the subunit protein which polymerizes to form the filaments of bacterial flagella. Important for motility and virulence. This Helicobacter pylori (strain ATCC 700392 / 26695) (Campylobacter pylori) protein is Flagellin A (flaA).